We begin with the raw amino-acid sequence, 348 residues long: Protein RecA (348 aa).

64 to 71 lines the ATP pocket; the sequence is GPESSGKT. A compositionally biased stretch (basic and acidic residues) spans 326 to 335; it reads EIDGTNKEPL. A disordered region spans residues 326 to 348; the sequence is EIDGTNKEPLDENEETLSLLDDE. Positions 336 to 348 are enriched in acidic residues; it reads DENEETLSLLDDE.

Belongs to the RecA family.

It is found in the cytoplasm. Its function is as follows. Can catalyze the hydrolysis of ATP in the presence of single-stranded DNA, the ATP-dependent uptake of single-stranded DNA by duplex DNA, and the ATP-dependent hybridization of homologous single-stranded DNAs. It interacts with LexA causing its activation and leading to its autocatalytic cleavage. The protein is Protein RecA of Listeria innocua serovar 6a (strain ATCC BAA-680 / CLIP 11262).